A 253-amino-acid chain; its full sequence is Phosphoglycerate mutase 2 (253 aa).

Position 3 is a phosphothreonine (T3). Substrate-binding positions include 10 to 17 (RHGESTWN), 23 to 24 (CG), R62, 89 to 92 (ERHY), K100, and 116 to 117 (RR). The active-site Tele-phosphohistidine intermediate is H11. S14 bears the Phosphoserine mark. E89 serves as the catalytic Proton donor/acceptor. S118 carries the post-translational modification Phosphoserine. Phosphotyrosine is present on residues Y132 and Y133. S135 carries the phosphoserine modification. At T152 the chain carries Phosphothreonine. 187–188 (GN) serves as a coordination point for substrate.

The protein belongs to the phosphoglycerate mutase family. BPG-dependent PGAM subfamily. As to quaternary structure, homodimer. Interacts with ENO1. As to expression, expressed in the heart and muscle. Not found in the liver and brain.

It carries out the reaction (2R)-2-phosphoglycerate = (2R)-3-phosphoglycerate. The catalysed reaction is (2R)-3-phospho-glyceroyl phosphate = (2R)-2,3-bisphosphoglycerate + H(+). In terms of biological role, interconversion of 3- and 2-phosphoglycerate with 2,3-bisphosphoglycerate as the primer of the reaction. Can also catalyze the reaction of EC 5.4.2.4 (synthase), but with a reduced activity. This Homo sapiens (Human) protein is Phosphoglycerate mutase 2 (PGAM2).